The chain runs to 270 residues: Tryptophan synthase alpha chain (270 aa).

Residues Glu-57 and Asp-68 each act as proton acceptor in the active site.

This sequence belongs to the TrpA family. As to quaternary structure, tetramer of two alpha and two beta chains.

It carries out the reaction (1S,2R)-1-C-(indol-3-yl)glycerol 3-phosphate + L-serine = D-glyceraldehyde 3-phosphate + L-tryptophan + H2O. It functions in the pathway amino-acid biosynthesis; L-tryptophan biosynthesis; L-tryptophan from chorismate: step 5/5. In terms of biological role, the alpha subunit is responsible for the aldol cleavage of indoleglycerol phosphate to indole and glyceraldehyde 3-phosphate. The sequence is that of Tryptophan synthase alpha chain from Mycobacterium bovis (strain ATCC BAA-935 / AF2122/97).